The sequence spans 115 residues: Large ribosomal subunit protein bL19 (115 aa).

It belongs to the bacterial ribosomal protein bL19 family.

This protein is located at the 30S-50S ribosomal subunit interface and may play a role in the structure and function of the aminoacyl-tRNA binding site. This is Large ribosomal subunit protein bL19 from Syntrophotalea carbinolica (strain DSM 2380 / NBRC 103641 / GraBd1) (Pelobacter carbinolicus).